Consider the following 1229-residue polypeptide: DNA-directed RNA polymerase subunit beta (1229 aa).

The segment at 1175–1229 is disordered; the sequence is ESIDEDEQPQGLGAFERGLEEVENGEEDDDKEKFYEDLMDASQEQDESADDDIDE. 2 stretches are compositionally biased toward acidic residues: residues 1195–1204 and 1211–1229; these read EVENGEEDDD and DLMD…DIDE.

The protein belongs to the RNA polymerase beta chain family. The RNAP catalytic core consists of 2 alpha, 1 beta, 1 beta' and 1 omega subunit. When a sigma factor is associated with the core the holoenzyme is formed, which can initiate transcription.

It carries out the reaction RNA(n) + a ribonucleoside 5'-triphosphate = RNA(n+1) + diphosphate. DNA-dependent RNA polymerase catalyzes the transcription of DNA into RNA using the four ribonucleoside triphosphates as substrates. The chain is DNA-directed RNA polymerase subunit beta from Caldicellulosiruptor saccharolyticus (strain ATCC 43494 / DSM 8903 / Tp8T 6331).